Reading from the N-terminus, the 511-residue chain is Centrosomal protein CCDC61 (511 aa).

Met1 is subject to N-acetylmethionine. A head domain region spans residues Met1–Pro143. Coiled-coil stretches lie at residues Ile176 to Glu203 and Ser246 to Glu273. Thr283 carries the post-translational modification Phosphothreonine. Disordered regions lie at residues Leu284 to Arg413 and Ser429 to Val476. The segment covering Arg290–Thr302 has biased composition (basic and acidic residues). Phosphoserine is present on residues Ser330 and Ser332. Positions Lys360–Met369 are enriched in low complexity. 2 positions are modified to phosphoserine: Ser371 and Ser374. Positions Ser433 to Gly442 are enriched in basic residues. A Phosphoserine modification is found at Ser446. Residues Pro449–Thr458 show a composition bias toward polar residues. Residue Ser472 is modified to Phosphoserine.

Belongs to the CCDC61 family. As to quaternary structure, forms homodimers (via head domain). Interacts with CEP170. Interacts with PCM1 and CEP131. Binds tubulin.

It localises to the cytoplasm. It is found in the cytoskeleton. The protein localises to the microtubule organizing center. The protein resides in the centrosome. Its subcellular location is the centriolar satellite. It localises to the cilium basal body. Functionally, microtubule-binding centrosomal protein required for centriole cohesion, independently of the centrosome-associated protein/CEP250 and rootletin/CROCC linker. In interphase, required for anchoring microtubule at the mother centriole subdistal appendages and for centrosome positioning. During mitosis, may be involved in spindle assembly and chromatin alignment by regulating the organization of spindle microtubules into a symmetrical structure. Plays a non-essential role in ciliogenesis. The protein is Centrosomal protein CCDC61 of Mus musculus (Mouse).